The chain runs to 31 residues: uncharacterized protein (31 aa).

This is an uncharacterized protein from Chlamydia phage 1 (Bacteriophage Chp1).